The chain runs to 183 residues: Peptidyl-prolyl cis-trans isomerase H (183 aa).

Residues 19 to 182 (FFDVALGGEP…QDVVIIQCGE (164 aa)) enclose the PPIase cyclophilin-type domain.

This sequence belongs to the cyclophilin-type PPIase family. PPIase H subfamily.

The protein resides in the nucleus. The enzyme catalyses [protein]-peptidylproline (omega=180) = [protein]-peptidylproline (omega=0). PPIases accelerate the folding of proteins. It catalyzes the cis-trans isomerization of proline imidic peptide bonds in oligopeptides. The sequence is that of Peptidyl-prolyl cis-trans isomerase H (cyp3) from Emericella nidulans (strain FGSC A4 / ATCC 38163 / CBS 112.46 / NRRL 194 / M139) (Aspergillus nidulans).